Here is a 44-residue protein sequence, read N- to C-terminus: Antibacterial protein 2 homolog (44 aa).

This sequence belongs to the staphylococcal hemolytic protein family.

Its subcellular location is the secreted. Its function is as follows. Has hemolytic activity and also inhibits the growth of gonococci. The chain is Antibacterial protein 2 homolog from Staphylococcus haemolyticus (strain JCSC1435).